Here is a 177-residue protein sequence, read N- to C-terminus: Large ribosomal subunit protein uL6 (177 aa).

This sequence belongs to the universal ribosomal protein uL6 family. As to quaternary structure, part of the 50S ribosomal subunit.

In terms of biological role, this protein binds to the 23S rRNA, and is important in its secondary structure. It is located near the subunit interface in the base of the L7/L12 stalk, and near the tRNA binding site of the peptidyltransferase center. The protein is Large ribosomal subunit protein uL6 of Micrococcus luteus (strain ATCC 4698 / DSM 20030 / JCM 1464 / CCM 169 / CCUG 5858 / IAM 1056 / NBRC 3333 / NCIMB 9278 / NCTC 2665 / VKM Ac-2230) (Micrococcus lysodeikticus).